A 507-amino-acid chain; its full sequence is MFIENFKVESPNVKYTDHEIHSVYDYETTELVHENRNGTYQWIVKPKTVKYEFKTDVHVPKLGVMLVGWGGNNGSTLTGGVIANREGICWATKDTVQQANYFGSLTQASAIRVGSYNGEEIYAPFKSILPMVNPDDIVFGGWDISDMNLADAMARARVFDIDLQKQLRPYMESMVPLPGIYDPDFIAANQGSRANNVIKGTKKEQMLQIIKDIREFKEKNKVDRVVVLWTANTERYSNVIVGLNDTVESLLASLDKNEAEISPSTLYAIACVLENIPFINGSPQNTFVPGLIDLAIRRNCLIGGDDFKSGQTKMKSVLVDFLVGAGIKPTSIVSYNHLGNNDGMNLSAPQTFRSKEISKSNVVDDMVSSNVFFMGLVNTRPRWIKYVPYVAIERAMDEYTSEIFMGGKSTIVLHNTCEDSLLAAPIILDLVLLAELSTRIQLKAEGEGKFHSFHPVATILSYLTKAPLVPPGTPVVNALSKQRAMLENILRACVGLAPENNMILEYK.

Residues Gly70, Gly71, Asn72, Asn73, Asp143, Ile180, Gln190, Arg193, Thr230, Ala231, Asn232, Thr233, Gly281, Ser282, Asp306, Ser309, Asn340, Asn341, Asp342, Lys355, Ala391, Asp419, and Ser420 each contribute to the NAD(+) site.

Belongs to the myo-inositol 1-phosphate synthase family. NAD(+) is required as a cofactor.

The protein resides in the cytoplasm. The protein localises to the cytosol. It is found in the nucleus. It carries out the reaction D-glucose 6-phosphate = 1D-myo-inositol 3-phosphate. The protein operates within polyol metabolism; myo-inositol biosynthesis; myo-inositol from D-glucose 6-phosphate: step 1/2. Functionally, key enzyme in myo-inositol biosynthesis pathway that catalyzes the conversion of glucose 6-phosphate to 1-myo-inositol 1-phosphate in a NAD-dependent manner. This is Inositol-3-phosphate synthase from Citrus paradisi (Grapefruit).